Consider the following 507-residue polypeptide: Cytochrome P450 monooxygenase cloA (507 aa).

The helical transmembrane segment at 15–35 (WTWILLTTCIALISPLVLKGI) threads the bilayer. Residue asparagine 247 is glycosylated (N-linked (GlcNAc...) asparagine). Residue cysteine 450 participates in heme binding.

The protein belongs to the cytochrome P450 family. It depends on heme as a cofactor.

Its subcellular location is the membrane. The protein operates within alkaloid biosynthesis; ergot alkaloid biosynthesis. Cytochrome P450 monooxygenase; part of the gene cluster that mediates the biosynthesis of fungal ergot alkaloid. DmaW catalyzes the first step of ergot alkaloid biosynthesis by condensing dimethylallyl diphosphate (DMAP) and tryptophan to form 4-dimethylallyl-L-tryptophan. The second step is catalyzed by the methyltransferase easF that methylates 4-dimethylallyl-L-tryptophan in the presence of S-adenosyl-L-methionine, resulting in the formation of 4-dimethylallyl-L-abrine. The catalase easC and the FAD-dependent oxidoreductase easE then transform 4-dimethylallyl-L-abrine to chanoclavine-I which is further oxidized by easD in the presence of NAD(+), resulting in the formation of chanoclavine-I aldehyde. Agroclavine dehydrogenase easG then mediates the conversion of chanoclavine-I aldehyde to agroclavine via a non-enzymatic adduct reaction: the substrate is an iminium intermediate that is formed spontaneously from chanoclavine-I aldehyde in the presence of glutathione. The presence of easA is not required to complete this reaction. Further conversion of agroclavine to paspalic acid is a two-step process involving oxidation of agroclavine to elymoclavine and of elymoclavine to paspalic acid, the second step being performed by the elymoclavine oxidase cloA. Paspalic acid is then further converted to D-lysergic acid. Ergopeptines are assembled from D-lysergic acid and three different amino acids by the D-lysergyl-peptide-synthetases composed each of a monomudular and a trimodular nonribosomal peptide synthetase subunit. LpsB and lpsC encode the monomodular subunits responsible for D-lysergic acid activation and incorporation into the ergopeptine backbone. LpsA1 and A2 subunits encode the trimodular nonribosomal peptide synthetase assembling the tripeptide portion of ergopeptines. LpsA1 is responsible for formation of the major ergopeptine, ergotamine, and lpsA2 for alpha-ergocryptine, the minor ergopeptine of the total alkaloid mixture elaborated by C.purpurea. D-lysergyl-tripeptides are assembled by the nonribosomal peptide synthetases and released as N-(D-lysergyl-aminoacyl)-lactams. Cyclolization of the D-lysergyl-tripeptides is performed by the Fe(2+)/2-ketoglutarate-dependent dioxygenase easH which introduces a hydroxyl group into N-(D-lysergyl-aminoacyl)-lactam at alpha-C of the aminoacyl residue followed by spontaneous condensation with the terminal lactam carbonyl group. The polypeptide is Cytochrome P450 monooxygenase cloA (Claviceps purpurea (strain 20.1) (Ergot fungus)).